The chain runs to 116 residues: Flagellar transcriptional regulator FlhD (116 aa).

The protein belongs to the FlhD family. In terms of assembly, homodimer; disulfide-linked. Forms a heterohexamer composed of two FlhC and four FlhD subunits. Each FlhC binds a FlhD dimer, forming a heterotrimer, and a hexamer assembles by dimerization of two heterotrimers.

The protein resides in the cytoplasm. Its function is as follows. Functions in complex with FlhC as a master transcriptional regulator that regulates transcription of several flagellar and non-flagellar operons by binding to their promoter region. Activates expression of class 2 flagellar genes, including fliA, which is a flagellum-specific sigma factor that turns on the class 3 genes. Also regulates genes whose products function in a variety of physiological pathways. The chain is Flagellar transcriptional regulator FlhD from Yersinia pseudotuberculosis serotype O:1b (strain IP 31758).